The sequence spans 347 residues: NADH-ubiquinone oxidoreductase chain 2 (347 aa).

Transmembrane regions (helical) follow at residues 3–23 (PLIFTMIMLTVILGTTIVMMS), 25–45 (HWLMIWMGFEMNMLAVIPLLM), 59–79 (YFLTQATASMLLMLAVIINLL), 96–116 (IIMTLALGMKMGLAPFHFWVP), 122–144 (ISLSSGLILLTWQKLAPLSVLYV), 149–171 (INLDLILLMSMMSIAIGGWGGLN), 178–198 (ILAYSSIAHMGWMASILVFNP), 202–222 (LLNLLLYILMTTTTFMLFMVA), 247–267 (IMLSLGGLPPLTGFLPKWMII), 276–296 (ITLATLMAITALLNLFFYMRL), and 326–346 (LPVLIILSTITLPLAPAITLL).

It belongs to the complex I subunit 2 family. Core subunit of respiratory chain NADH dehydrogenase (Complex I) which is composed of 45 different subunits. Interacts with TMEM242.

It localises to the mitochondrion inner membrane. It catalyses the reaction a ubiquinone + NADH + 5 H(+)(in) = a ubiquinol + NAD(+) + 4 H(+)(out). Its function is as follows. Core subunit of the mitochondrial membrane respiratory chain NADH dehydrogenase (Complex I) which catalyzes electron transfer from NADH through the respiratory chain, using ubiquinone as an electron acceptor. Essential for the catalytic activity and assembly of complex I. This chain is NADH-ubiquinone oxidoreductase chain 2, found in Saccopteryx bilineata (Greater white-lined bat).